The primary structure comprises 554 residues: Urocanate hydratase (554 aa).

NAD(+)-binding positions include 50–51, Q128, 174–176, E194, R199, 240–241, 261–265, 271–272, and Y320; these read GG, GMG, NA, QTSAH, and YI. C408 is an active-site residue. G490 is an NAD(+) binding site.

The protein belongs to the urocanase family. Requires NAD(+) as cofactor.

The protein localises to the cytoplasm. The catalysed reaction is 4-imidazolone-5-propanoate = trans-urocanate + H2O. It participates in amino-acid degradation; L-histidine degradation into L-glutamate; N-formimidoyl-L-glutamate from L-histidine: step 2/3. Catalyzes the conversion of urocanate to 4-imidazolone-5-propionate. This chain is Urocanate hydratase, found in Rubrobacter xylanophilus (strain DSM 9941 / JCM 11954 / NBRC 16129 / PRD-1).